A 250-amino-acid chain; its full sequence is Heme oxygenase 2 (250 aa).

Heme b is bound at residue His16. Residues 228 to 250 (QDRPGSTEARSTAGHPITLMVGE) are disordered.

The protein belongs to the heme oxygenase family. In terms of assembly, homodimer.

It catalyses the reaction heme b + 3 reduced [NADPH--hemoprotein reductase] + 3 O2 = biliverdin IXalpha + CO + Fe(2+) + 3 oxidized [NADPH--hemoprotein reductase] + 3 H2O + H(+). Catalyzes the opening of the heme ring with the release of iron. Key enzyme in the synthesis of the chromophoric part of the photosynthetic antennae. This is Heme oxygenase 2 (pbsA2) from Synechocystis sp. (strain ATCC 27184 / PCC 6803 / Kazusa).